Consider the following 50-residue polypeptide: uncharacterized protein (50 aa).

Residues 1-50 are disordered; that stretch reads MKTGFWQQVLPKRAGRRKEHPVQYMPHKKEENATGLMNPSLHTSHSAILK. The span at 35–50 shows a compositional bias: polar residues; sequence GLMNPSLHTSHSAILK.

This is an uncharacterized protein from Treponema pallidum (strain Nichols).